The following is a 638-amino-acid chain: MTSDATGSELIKSKLVDAPECAGVYQMFDVNKQVIYVGKAKNLKKRLTNYIKLDLDNKTLRMIANTCFLEYSVTSSEVEALLLEAQLIKKFQPKFNILLKDDKSFPFIKLRLDHDFPQLLKYRGRTRTLSDGKFFGPFASATAVNTTLTELQKIFKLRSCTDNYFNSRNRPCLQYEIKRCYAPCISKINKKDYAELVIQVTAFLQGHTKELQENLSKKMEELSSHMYFEEAAEIRDRIKALSYVQLKAGISDIVKDADIMAIVEKNGHYCVEVCLYRAGQACGTIPYFPTAMGNNTKEAILKYFLLQFYQKQQLPSEIIINNEVEDKEDVIEAIKKINNITKLNIILPISGGKAKLVQNATTNALFSLEQYLKKFAKNQEIMLEIKELFDLSEIPERIEIYDNSHIQGKFAVGVMVVAGKSGFDKKEYRVFSLSSHDSITGFSTLTNNLDPVVKQQYDTNGTYNTTVGDDYDMFRQVLTRRLTRLKQEPYKLPSLMIIDGGRGHVGIVKEVMDKFKMNIPFVCMSKGPDRNAGLEQFHMVGKEVFTLDKNLPVMKYLQILRDAAHSFAIKNHRLGRSRTIKLSSLDNIKGIGKTRKKSLLHYFGSYKAVCDATIDELVKVHGISKSLAEMIFRTLHQS.

A GIY-YIG domain is found at 20-97 (ECAGVYQMFD…IKKFQPKFNI (78 aa)). Residues 209-244 (KELQENLSKKMEELSSHMYFEEAAEIRDRIKALSYV) enclose the UVR domain.

It belongs to the UvrC family. Interacts with UvrB in an incision complex.

Its subcellular location is the cytoplasm. In terms of biological role, the UvrABC repair system catalyzes the recognition and processing of DNA lesions. UvrC both incises the 5' and 3' sides of the lesion. The N-terminal half is responsible for the 3' incision and the C-terminal half is responsible for the 5' incision. The protein is UvrABC system protein C of Rickettsia canadensis (strain McKiel).